A 144-amino-acid chain; its full sequence is Large ribosomal subunit protein uL15 (144 aa).

The interval 1–56 is disordered; the sequence is MELNNLKPAAGAKHAKRRVGRGIGSGLGKTAGRGHKGQKSRSGGFHKVGFEGGQMP. Over residues 21 to 31 the composition is skewed to gly residues; the sequence is RGIGSGLGKTA.

The protein belongs to the universal ribosomal protein uL15 family. Part of the 50S ribosomal subunit.

Its function is as follows. Binds to the 23S rRNA. The protein is Large ribosomal subunit protein uL15 of Burkholderia multivorans (strain ATCC 17616 / 249).